Here is a 266-residue protein sequence, read N- to C-terminus: MIIRFLALLFSAVVLVSLGHAQEKTHESSNWGKYFSDFNAKGTIVVVDERTNGNSTSVYNESRAQQRYSPASTFKIPHTLFALDAGAVRDEFHVFRWDGAKRSFAGHNQDQNLRSAMRNSTVWVYQLFAKEIGENKARSYLEKLNYGNADPSTKSGDYWIDGNLAISANEQISILKKLYRNELPFRVEHQRLVKDLMIVEAKRDWILRAKTGWDGQMGWWVGWVEWPTGPVFFALNIDTPNRMEDLHKREAIARAILQSVNALPPN.

An N-terminal signal peptide occupies residues 1-21 (MIIRFLALLFSAVVLVSLGHA). S72 acts as the Acyl-ester intermediate in catalysis. K75 is subject to N6-carboxylysine. Residue 210–212 (KTG) participates in substrate binding.

It belongs to the class-D beta-lactamase family.

The catalysed reaction is a beta-lactam + H2O = a substituted beta-amino acid. Its activity is regulated as follows. Inhibited by clavulanic acid. This is an oxacillin-hydrolyzing beta-lactamase. This chain is Beta-lactamase OXA-20 (bla), found in Pseudomonas aeruginosa.